A 288-amino-acid chain; its full sequence is 4-hydroxybenzoate octaprenyltransferase (288 aa).

8 helical membrane-spanning segments follow: residues 23–43, 46–66, 98–118, 141–161, 165–185, 213–233, 234–254, and 268–288; these read IGSL…GKGI, TKIL…GCVV, ILFV…NSMT, LPQV…FAAV, LPLV…AYDT, LIIG…GWLM, NLGG…VHQQ, and AFLN…ISYL.

It belongs to the UbiA prenyltransferase family. Requires Mg(2+) as cofactor.

The protein resides in the cell inner membrane. The catalysed reaction is all-trans-octaprenyl diphosphate + 4-hydroxybenzoate = 4-hydroxy-3-(all-trans-octaprenyl)benzoate + diphosphate. It functions in the pathway cofactor biosynthesis; ubiquinone biosynthesis. Catalyzes the prenylation of para-hydroxybenzoate (PHB) with an all-trans polyprenyl group. Mediates the second step in the final reaction sequence of ubiquinone-8 (UQ-8) biosynthesis, which is the condensation of the polyisoprenoid side chain with PHB, generating the first membrane-bound Q intermediate 3-octaprenyl-4-hydroxybenzoate. This chain is 4-hydroxybenzoate octaprenyltransferase, found in Yersinia enterocolitica serotype O:8 / biotype 1B (strain NCTC 13174 / 8081).